The following is a 492-amino-acid chain: Catalase (492 aa).

Catalysis depends on residues histidine 65 and asparagine 138. Residue tyrosine 348 coordinates heme.

The protein belongs to the catalase family. As to quaternary structure, homotetramer. Heme is required as a cofactor.

It is found in the cytoplasm. The protein localises to the cytosol. It localises to the peroxisome matrix. The enzyme catalyses 2 H2O2 = O2 + 2 H2O. Catalyzes the degradation of hydrogen peroxide (H(2)O(2)) generated by peroxisomal oxidases to water and oxygen, thereby protecting cells from the toxic effects of hydrogen peroxide. This is Catalase from Soldanella alpina (Alpine snowbell).